Here is a 208-residue protein sequence, read N- to C-terminus: Small ribosomal subunit protein uS4 (208 aa).

In terms of domain architecture, S4 RNA-binding spans C98–A160.

Belongs to the universal ribosomal protein uS4 family. In terms of assembly, part of the 30S ribosomal subunit. Contacts protein S5. The interaction surface between S4 and S5 is involved in control of translational fidelity.

In terms of biological role, one of the primary rRNA binding proteins, it binds directly to 16S rRNA where it nucleates assembly of the body of the 30S subunit. With S5 and S12 plays an important role in translational accuracy. This chain is Small ribosomal subunit protein uS4, found in Ruthia magnifica subsp. Calyptogena magnifica.